Here is a 79-residue protein sequence, read N- to C-terminus: Hematopoietic cell signal transducer (79 aa).

The N-terminal stretch at 1 to 17 (MDPPGYLLFLLLLPVAA) is a signal peptide. The Extracellular portion of the chain corresponds to 18–35 (SQTSAGSCSGCGTLSLPL). Residues 36-56 (LAGLVAADAVMSLLIVGVVFV) form a helical membrane-spanning segment. Over 57–79 (CMRPHGRPAQEDGRVYINMPGRG) the chain is Cytoplasmic. Tyr72 is subject to Phosphotyrosine. The segment at 72–74 (YIN) is GRB2 binding site. Residues 72 to 75 (YINM) are PIK3R1 binding site.

This sequence belongs to the DAP10 family. Homodimer; Disulfide-linked. Interacts with KLRK1 to form a stable complex, which results in surface expression of both proteins, whereas alone, it is minimally expressed. Interacts with PIK3R1 and GRB2. Interacts with CLEC5A. Forms an CLEC5A/TYROBP/HCST trimolecular complex depending almost solely on TYROBP. Heterohexamer composed of four subunits of HCST/DAP10 and two subunits of KLRK1. Interacts (via transmembrane domain) with KLRK1 isoform 1 (via transmembrane domain); the interaction is required for KLRK1 cell surface expression on naive NK cells and activated CD8(+) T-cells, but is dispensable on activated TYROBP-expressing NK cells. Interacts (via transmembrane domain) with KLRK1 isoform 2 (via transmembrane domain); the interaction is required for KLRK1 NK cell surface expression and induces NK cell-mediated cytotoxicity. Interacts with CD300H. In terms of processing, phosphorylated; PIK3R1 and GRB2 associate specifically with tyrosine-phosphorylated HCST. Post-translationally, O-glycosylated.

It localises to the membrane. Its function is as follows. Transmembrane adapter protein which associates with KLRK1 to form an activation receptor KLRK1-HCST in lymphoid and myeloid cells; this receptor plays a major role in triggering cytotoxicity against target cells expressing cell surface ligands such as MHC class I chain-related MICA and MICB, and UL16-binding proteins (ULBPs); these ligands are up-regulated by stress conditions and pathological state such as viral infection and tumor transformation. Functions as a docking site for PI3-kinase PIK3R1 and GRB2. Interaction of ULBPs with KLRK1-HCST triggers calcium mobilization and activation of the PIK3R1, MAP2K/ERK, and JAK2/STAT5 signaling pathways. Both PIK3R1 and GRB2 are required for full KLRK1-HCST-mediated activation and ultimate killing of target cells. In NK cells, KLRK1-HCST signaling directly induces cytotoxicity and enhances cytokine production initiated via DAP12/TYROBP-associated receptors. In T-cells, it provides primarily costimulation for TCR-induced signals. KLRK1-HCST receptor plays a role in immune surveillance against tumors and is required for cytolysis of tumors cells; indeed, melanoma cells that do not express KLRK1 ligands escape from immune surveillance mediated by NK cells. This Mus musculus (Mouse) protein is Hematopoietic cell signal transducer (Hcst).